The primary structure comprises 457 residues: Tryptophan aminotransferase-related protein 3 (457 aa).

A helical transmembrane segment spans residues 6–26; that stretch reads LLIAGSIILNLVFTIHILYNN. Residues tyrosine 123, 163-164, asparagine 237, 257-260, 280-283, and arginine 291 each bind pyridoxal 5'-phosphate; these read AT, DYAY, and SLSK. Lysine 283 carries the N6-(pyridoxal phosphate)lysine modification.

This sequence belongs to the alliinase family. Requires pyridoxal 5'-phosphate as cofactor.

The protein localises to the membrane. Probable aminotransferase. This Arabidopsis thaliana (Mouse-ear cress) protein is Tryptophan aminotransferase-related protein 3 (TAR3).